We begin with the raw amino-acid sequence, 135 residues long: uncharacterized protein (135 aa).

The next 4 membrane-spanning stretches (helical) occupy residues isoleucine 4–glycine 24, tryptophan 26–isoleucine 46, leucine 68–tryptophan 88, and leucine 93–leucine 113.

Belongs to the bacteriophage holin family. Cp-1 holin subfamily.

It is found in the cell membrane. This is an uncharacterized protein from Clostridium perfringens (strain 13 / Type A).